We begin with the raw amino-acid sequence, 252 residues long: 5'-nucleotidase SurE (252 aa).

A divalent metal cation contacts are provided by Asp8, Asp9, Ser39, and Asn95.

The protein belongs to the SurE nucleotidase family. A divalent metal cation serves as cofactor.

It is found in the cytoplasm. The enzyme catalyses a ribonucleoside 5'-phosphate + H2O = a ribonucleoside + phosphate. Nucleotidase that shows phosphatase activity on nucleoside 5'-monophosphates. In Clostridium botulinum (strain Okra / Type B1), this protein is 5'-nucleotidase SurE.